We begin with the raw amino-acid sequence, 491 residues long: Glucose-6-phosphate exchanger SLC37A2 (491 aa).

Residues leucine 5 to cysteine 25 traverse the membrane as a helical segment. Asparagine 43, asparagine 52, and asparagine 58 each carry an N-linked (GlcNAc...) asparagine glycan. 5 helical membrane passes run glycine 78–phenylalanine 98, leucine 108–isoleucine 130, valine 132–valine 154, leucine 169–alanine 189, and serine 200–isoleucine 220. A disordered region spans residues serine 229–serine 257. The next 6 helical transmembrane spans lie at leucine 292–isoleucine 312, threonine 328–isoleucine 348, alanine 352–valine 372, isoleucine 377–leucine 397, alanine 424–isoleucine 444, and valine 452–tyrosine 472.

This sequence belongs to the major facilitator superfamily. Organophosphate:Pi antiporter (OPA) (TC 2.A.1.4) family.

The protein localises to the endoplasmic reticulum membrane. The catalysed reaction is D-glucose 6-phosphate(in) + phosphate(out) = D-glucose 6-phosphate(out) + phosphate(in). Its activity is regulated as follows. Inhibited by vanadate but not by chlorogenic acid. In terms of biological role, inorganic phosphate and glucose-6-phosphate antiporter. May transport cytoplasmic glucose-6-phosphate into the lumen of the endoplasmic reticulum and translocate inorganic phosphate into the opposite direction. Independent of a lumenal glucose-6-phosphatase. May not play a role in homeostatic regulation of blood glucose levels. In Bos taurus (Bovine), this protein is Glucose-6-phosphate exchanger SLC37A2.